The chain runs to 464 residues: Methionine aminopeptidase 2 (464 aa).

The interval 1-86 (MGSKTPGNHR…RKKKKKNTKE (86 aa)) is disordered. Residues 43–54 (GESEGGEDEDDD) show a composition bias toward acidic residues. Over residues 72-83 (KRNKRRKKKKKN) the composition is skewed to basic residues. Residue histidine 216 participates in substrate binding. 3 residues coordinate a divalent metal cation: aspartate 237, aspartate 248, and histidine 317. Histidine 325 lines the substrate pocket. Positions 350 and 445 each coordinate a divalent metal cation.

It belongs to the peptidase M24A family. Methionine aminopeptidase eukaryotic type 2 subfamily. The cofactor is Co(2+). Requires Zn(2+) as cofactor. It depends on Mn(2+) as a cofactor. Fe(2+) serves as cofactor.

Its subcellular location is the cytoplasm. It carries out the reaction Release of N-terminal amino acids, preferentially methionine, from peptides and arylamides.. Its function is as follows. Cotranslationally removes the N-terminal methionine from nascent proteins. The N-terminal methionine is often cleaved when the second residue in the primary sequence is small and uncharged (Met-Ala-, Cys, Gly, Pro, Ser, Thr, or Val). In Ajellomyces capsulatus (strain NAm1 / WU24) (Darling's disease fungus), this protein is Methionine aminopeptidase 2.